We begin with the raw amino-acid sequence, 176 residues long: Shikimate kinase (176 aa).

12–17 (GSGKST) lines the ATP pocket. Residue Ser16 participates in Mg(2+) binding. Positions 34, 58, and 80 each coordinate substrate. Arg117 is a binding site for ATP. Arg136 provides a ligand contact to substrate. Arg153 provides a ligand contact to ATP.

This sequence belongs to the shikimate kinase family. As to quaternary structure, monomer. Requires Mg(2+) as cofactor.

The protein resides in the cytoplasm. It carries out the reaction shikimate + ATP = 3-phosphoshikimate + ADP + H(+). Its pathway is metabolic intermediate biosynthesis; chorismate biosynthesis; chorismate from D-erythrose 4-phosphate and phosphoenolpyruvate: step 5/7. Catalyzes the specific phosphorylation of the 3-hydroxyl group of shikimic acid using ATP as a cosubstrate. The sequence is that of Shikimate kinase from Mycobacterium avium (strain 104).